Reading from the N-terminus, the 183-residue chain is NADH-quinone oxidoreductase subunit I (183 aa).

2 consecutive 4Fe-4S ferredoxin-type domains span residues 71 to 100 and 117 to 146; these read KRDE…MKAA and EIYE…LTTS. Residues Cys-80, Cys-83, Cys-86, Cys-90, Cys-126, Cys-129, Cys-132, and Cys-136 each coordinate [4Fe-4S] cluster.

It belongs to the complex I 23 kDa subunit family. As to quaternary structure, NDH-1 is composed of 14 different subunits. Subunits NuoA, H, J, K, L, M, N constitute the membrane sector of the complex. [4Fe-4S] cluster serves as cofactor.

The protein resides in the cell inner membrane. It catalyses the reaction a quinone + NADH + 5 H(+)(in) = a quinol + NAD(+) + 4 H(+)(out). NDH-1 shuttles electrons from NADH, via FMN and iron-sulfur (Fe-S) centers, to quinones in the respiratory chain. The immediate electron acceptor for the enzyme in this species is believed to be ubiquinone. Couples the redox reaction to proton translocation (for every two electrons transferred, four hydrogen ions are translocated across the cytoplasmic membrane), and thus conserves the redox energy in a proton gradient. This is NADH-quinone oxidoreductase subunit I from Flavobacterium psychrophilum (strain ATCC 49511 / DSM 21280 / CIP 103535 / JIP02/86).